The chain runs to 187 residues: Elongation factor P (187 aa).

The protein belongs to the elongation factor P family.

It is found in the cytoplasm. The protein operates within protein biosynthesis; polypeptide chain elongation. Its function is as follows. Involved in peptide bond synthesis. Stimulates efficient translation and peptide-bond synthesis on native or reconstituted 70S ribosomes in vitro. Probably functions indirectly by altering the affinity of the ribosome for aminoacyl-tRNA, thus increasing their reactivity as acceptors for peptidyl transferase. This Azobacteroides pseudotrichonymphae genomovar. CFP2 protein is Elongation factor P.